Consider the following 148-residue polypeptide: Multiprotein-bridging factor 1c (148 aa).

Residues 91–145 form the HTH cro/C1-type domain; that stretch reads IQKARLEKKMSQADLAKQINERTQVVQEYENGKAVPNQAVLAKMEKVLGVKLRGK. The segment at residues 102–121 is a DNA-binding region (H-T-H motif); it reads QADLAKQINERTQVVQEYEN.

This sequence belongs to the MBF1 family. In terms of assembly, binds to TPS5. In terms of tissue distribution, expressed in leaves, roots, stems, flowers, siliques and shoots. Not detected in seeds.

It is found in the nucleus. The protein localises to the nucleolus. The protein resides in the cytoplasm. Transcriptional coactivator that stimulates transcriptional activity by bridging regulatory proteins and TBP, thereby recruiting TBP to promoters occupied by DNA-binding regulators. Involved in the tolerance to heat and osmotic stress by partially activating the ethylene-response signal transduction pathway. This is Multiprotein-bridging factor 1c (MBF1C) from Arabidopsis thaliana (Mouse-ear cress).